Consider the following 572-residue polypeptide: Probable D-xylulose kinase A (572 aa).

Substrate contacts are provided by H95, R166, D282, and N283. ATP is bound by residues W365, 470-471, and N474; that span reads GG.

It belongs to the FGGY kinase family.

It is found in the cytoplasm. The enzyme catalyses D-xylulose + ATP = D-xylulose 5-phosphate + ADP + H(+). In terms of biological role, highly specific D-xylulose kinase which participates in the catabolism of xylose. Xylose is a major component of hemicelluloses such as xylan. Most fungi utilize D-xylose via three enzymatic reactions, xylose reductase (XR), xylitol dehydrogenase (XDH), and xylulokinase, to form xylulose 5-phosphate, which enters pentose phosphate pathway. The chain is Probable D-xylulose kinase A (xkiA) from Aspergillus flavus (strain ATCC 200026 / FGSC A1120 / IAM 13836 / NRRL 3357 / JCM 12722 / SRRC 167).